The sequence spans 91 residues: Small ribosomal subunit protein bS16 (91 aa).

Belongs to the bacterial ribosomal protein bS16 family.

This is Small ribosomal subunit protein bS16 from Ligilactobacillus salivarius (strain UCC118) (Lactobacillus salivarius).